The sequence spans 321 residues: Biotin synthase (321 aa).

One can recognise a Radical SAM core domain in the interval Arg44–Arg270. The [4Fe-4S] cluster site is built by Cys59, Cys63, and Cys66. Cys103, Cys135, Cys195, and Arg265 together coordinate [2Fe-2S] cluster.

The protein belongs to the radical SAM superfamily. Biotin synthase family. In terms of assembly, homodimer. The cofactor is [4Fe-4S] cluster. [2Fe-2S] cluster is required as a cofactor.

It catalyses the reaction (4R,5S)-dethiobiotin + (sulfur carrier)-SH + 2 reduced [2Fe-2S]-[ferredoxin] + 2 S-adenosyl-L-methionine = (sulfur carrier)-H + biotin + 2 5'-deoxyadenosine + 2 L-methionine + 2 oxidized [2Fe-2S]-[ferredoxin]. It functions in the pathway cofactor biosynthesis; biotin biosynthesis; biotin from 7,8-diaminononanoate: step 2/2. Its function is as follows. Catalyzes the conversion of dethiobiotin (DTB) to biotin by the insertion of a sulfur atom into dethiobiotin via a radical-based mechanism. This chain is Biotin synthase, found in Magnetococcus marinus (strain ATCC BAA-1437 / JCM 17883 / MC-1).